The following is a 432-amino-acid chain: DnaJ-like protein 1 (432 aa).

In terms of domain architecture, J spans 4–73; it reads DTEYYDLLGV…RAKYDKYGRK (70 aa). Positions 117-187 are disordered; the sequence is NAEDEAEKEK…KKNEQVGAEA (71 aa).

Belongs to the DnaJ family. Interacts with SLN1.

Its subcellular location is the cytoplasm. Functionally, required for peroxisomal protein import which maintains the function of peroxisomes. In Saccharomyces cerevisiae (strain ATCC 204508 / S288c) (Baker's yeast), this protein is DnaJ-like protein 1 (DJP1).